The primary structure comprises 546 residues: Chaperonin GroEL (546 aa).

Residues 29-32 (TMGP), Lys-50, 86-90 (DGTTT), Gly-414, and Asp-492 each bind ATP.

Belongs to the chaperonin (HSP60) family. Forms a cylinder of 14 subunits composed of two heptameric rings stacked back-to-back. Interacts with the co-chaperonin GroES.

Its subcellular location is the cytoplasm. It catalyses the reaction ATP + H2O + a folded polypeptide = ADP + phosphate + an unfolded polypeptide.. Together with its co-chaperonin GroES, plays an essential role in assisting protein folding. The GroEL-GroES system forms a nano-cage that allows encapsulation of the non-native substrate proteins and provides a physical environment optimized to promote and accelerate protein folding. This Helicobacter pylori (strain P12) protein is Chaperonin GroEL.